The sequence spans 64 residues: Disintegrin schistatin (64 aa).

The Disintegrin domain maps to 1-64; it reads NSVHPCCDPV…PDCPRNRYNV (64 aa). Intrachain disulfides connect Cys6-Cys29, Cys20-Cys26, Cys25-Cys50, and Cys38-Cys57. The Cell attachment site signature appears at 42-44; it reads RGD.

Belongs to the disintegrin family. Dimeric disintegrin subfamily. As to quaternary structure, homodimer; disulfide-linked. Expressed by the venom gland.

The protein resides in the secreted. Its function is as follows. May bind to both alpha-IIb/beta-3 (ITGA2B/ITGB3) and alpha-V/beta-3 (ITGAV/ITGB3) integrins, and may inhibit platelet aggregation. This Echis carinatus (Saw-scaled viper) protein is Disintegrin schistatin.